Here is a 169-residue protein sequence, read N- to C-terminus: uncharacterized protein (169 aa).

A helical transmembrane segment spans residues 10–30 (YFVTILIIIIIILIVLLIVFL). A disordered region spans residues 98 to 123 (QSKPINKNNQQTKNTPTPLDDRPDLS). Residues 100–115 (KPINKNNQQTKNTPTP) are compositionally biased toward low complexity.

The protein resides in the membrane. This is an uncharacterized protein from Acanthamoeba polyphaga (Amoeba).